The primary structure comprises 679 residues: Transmembrane protein 214-B (679 aa).

Residues 1 to 94 form a disordered region; sequence MASGAPDGKW…KKKPQSGDSV (94 aa). A compositionally biased stretch (basic and acidic residues) spans 18–30; that stretch reads KSGERREGERKAL. 3 N-linked (GlcNAc...) asparagine glycosylation sites follow: Asn-70, Asn-298, and Asn-322. 2 helical membrane-spanning segments follow: residues 468-488 and 606-626; these read GGFP…GSVL and LLLH…EAAV.

It belongs to the TMEM214 family. Constitutively interacts with CASP4; required for the localization of procaspase 4 to the ER.

The protein localises to the endoplasmic reticulum membrane. Its function is as follows. Critical mediator, in cooperation with CASP4, of endoplasmic reticulum-stress induced apoptosis. Required or the activation of CASP4 following endoplasmic reticulum stress. This chain is Transmembrane protein 214-B (tmem214-b), found in Xenopus laevis (African clawed frog).